Consider the following 605-residue polypeptide: Inactive LRR receptor-like serine/threonine-protein kinase BIR2 (605 aa).

An N-terminal signal peptide occupies residues 1 to 28; that stretch reads MKEIGSKPRKLLPLCFIIFLCFCSSVMA. Residues 29–229 are Extracellular-facing; sequence ADEDDIRCLR…CGGLSKKNLG (201 aa). N58 carries N-linked (GlcNAc...) asparagine glycosylation. LRR repeat units lie at residues 101-125, 127-150, 152-173, and 174-197; these read CASLQKLDLSSNRLSGNIPTELCNW, PFLVSLDLSNNELNGEIPPDLAKC, FVNSLVLSDNRLSGQIPVQFSA, and LGRLGRFSVANNDLSGRIPVFFSS. Residues 230-250 form a helical membrane-spanning segment; the sequence is IIIAAGVFGAAASMLLAFGIW. Residues 251–605 lie on the Cytoplasmic side of the membrane; sequence WYYHLKWTRR…IFDTQENEKV (355 aa). S271 is modified (phosphoserine; by BAK1). T283 bears the Phosphothreonine; by BAK1 mark. S286 carries the phosphoserine; by BAK1 modification. A Phosphothreonine; by BAK1 modification is found at T304. A Protein kinase domain is found at 307-578; it reads FNSENIIVST…FQAYQSLKAI (272 aa). Residue 313-321 participates in ATP binding; sequence IVSTRTGTT. At S330 the chain carries Phosphoserine; by BAK1. K335 is an ATP binding site. S389 bears the Phosphoserine; by BAK1 mark. T402 carries the phosphothreonine modification. S448 and S462 each carry phosphoserine; by BAK1. At T466 the chain carries Phosphothreonine; by BAK1. A Phosphotyrosine modification is found at Y479. T482 carries the post-translational modification Phosphothreonine. S486 is subject to Phosphoserine. The residue at position 533 (T533) is a Phosphothreonine; by BAK1.

The protein belongs to the protein kinase superfamily. Ser/Thr protein kinase family. In terms of assembly, interacts constitutively with BAK1, when phosphorylated, thereby preventing interaction with the ligand-binding LRR-RLK FLS2. Upon infection, pathogen-associated molecular patterns (PAMP) perception leads to BIR2 release from the BAK1 complex and enables the recruitment of BAK1 into the FLS2 complex. In terms of processing, phosphorylated by BAK1, this interacts promotes interaction with BAK1.

Its subcellular location is the cell membrane. Functionally, pseudokinases lacking protein kinase activity and unable to bind ATP-analogs. Negative regulator of pathogen-associated molecular patterns- (PAMP-) triggered immunity by limiting BAK1-receptor complex formation in the absence of ligands. The chain is Inactive LRR receptor-like serine/threonine-protein kinase BIR2 from Arabidopsis thaliana (Mouse-ear cress).